A 90-amino-acid chain; its full sequence is Evasin P1128 (90 aa).

Positions 1–18 are cleaved as a signal peptide; that stretch reads MFIALGIQLFVAVTYAAG. Intrachain disulfides connect cysteine 29-cysteine 51, cysteine 33-cysteine 53, and cysteine 44-cysteine 64. A glycan (N-linked (GlcNAc...) asparagine) is linked at asparagine 32.

It is found in the secreted. Salivary chemokine-binding protein which binds to host chemokines CXCL1, CXCL2, CXCL3, CXCL5 and CXCL8. This Ixodes ricinus (Common tick) protein is Evasin P1128.